The following is a 120-amino-acid chain: uncharacterized protein (120 aa).

The protein to M.tuberculosis Rv0026 and Rv0739.

This is an uncharacterized protein from Mycobacterium tuberculosis (strain CDC 1551 / Oshkosh).